A 117-amino-acid chain; its full sequence is Large ribosomal subunit protein eL8 (117 aa).

It belongs to the eukaryotic ribosomal protein eL8 family. Part of the 50S ribosomal subunit. Part of the RNase P complex.

It localises to the cytoplasm. The catalysed reaction is Endonucleolytic cleavage of RNA, removing 5'-extranucleotides from tRNA precursor.. Functionally, multifunctional RNA-binding protein that recognizes the K-turn motif in ribosomal RNA, the RNA component of RNase P, box H/ACA, box C/D and box C'/D' sRNAs. Part of ribonuclease P, a protein complex that generates mature tRNA molecules by cleaving their 5'-ends, this subunit dramatically stimulates RNase P activity. This Methanococcus maripaludis (strain DSM 14266 / JCM 13030 / NBRC 101832 / S2 / LL) protein is Large ribosomal subunit protein eL8.